The primary structure comprises 100 residues: Urease subunit gamma (100 aa).

This sequence belongs to the urease gamma subunit family. In terms of assembly, heterotrimer of UreA (gamma), UreB (beta) and UreC (alpha) subunits. Three heterotrimers associate to form the active enzyme.

Its subcellular location is the cytoplasm. It catalyses the reaction urea + 2 H2O + H(+) = hydrogencarbonate + 2 NH4(+). Its pathway is nitrogen metabolism; urea degradation; CO(2) and NH(3) from urea (urease route): step 1/1. This is Urease subunit gamma from Ruegeria pomeroyi (strain ATCC 700808 / DSM 15171 / DSS-3) (Silicibacter pomeroyi).